The sequence spans 258 residues: 4-oxalmesaconate hydratase (258 aa).

Zn(2+) is bound by residues His28, Asp31, and His141.

This sequence belongs to the MshB deacetylase family. Zn(2+) is required as a cofactor.

It catalyses the reaction 2-hydroxy-4-oxobutane-1,2,4-tricarboxylate = 4-carboxy-2-hydroxy-cis,cis-muconate + H2O. Functionally, catalyzes the conversion of oxalomesaconic acid enol (OMAenol) to 4-carboxy-4-hydroxy-2-oxoadipic acid (CHA). Mediates the third step of gallate degradation pathway. The polypeptide is 4-oxalmesaconate hydratase (galB) (Pseudomonas putida (strain ATCC 47054 / DSM 6125 / CFBP 8728 / NCIMB 11950 / KT2440)).